The primary structure comprises 250 residues: Eukaryotic translation initiation factor 3 subunit K (250 aa).

The PCI domain maps to 46–229 (FDCYANLALL…KENEARSEVK (184 aa)).

The protein belongs to the eIF-3 subunit K family. As to quaternary structure, component of the eukaryotic translation initiation factor 3 (eIF-3) complex.

It is found in the cytoplasm. Its function is as follows. Component of the eukaryotic translation initiation factor 3 (eIF-3) complex, which is involved in protein synthesis of a specialized repertoire of mRNAs and, together with other initiation factors, stimulates binding of mRNA and methionyl-tRNAi to the 40S ribosome. The eIF-3 complex specifically targets and initiates translation of a subset of mRNAs involved in cell proliferation. This Emericella nidulans (strain FGSC A4 / ATCC 38163 / CBS 112.46 / NRRL 194 / M139) (Aspergillus nidulans) protein is Eukaryotic translation initiation factor 3 subunit K.